The following is a 512-amino-acid chain: Phospho-2-dehydro-3-deoxyheptonate aldolase 2, chloroplastic (512 aa).

Residues Met-1–Pro-57 constitute a chloroplast transit peptide. Positions Phe-37–Pro-57 are disordered. Cys-126 contacts Mn(2+). Residues Arg-165, Glu-324–Arg-325, Lys-347, and Arg-378 each bind substrate. Positions 410, 452, and 482 each coordinate Mn(2+).

The protein belongs to the class-II DAHP synthase family. In terms of assembly, homodimer. Mn(2+) serves as cofactor. Mostly expressed in leaves and stems, and, to a lower extent, in roots, stigmas, anthers, petal tubes, petal limbs and sepals.

The protein resides in the plastid. The protein localises to the chloroplast. The enzyme catalyses D-erythrose 4-phosphate + phosphoenolpyruvate + H2O = 7-phospho-2-dehydro-3-deoxy-D-arabino-heptonate + phosphate. It functions in the pathway metabolic intermediate biosynthesis; chorismate biosynthesis; chorismate from D-erythrose 4-phosphate and phosphoenolpyruvate: step 1/7. Its function is as follows. Involved in the production of volatile organic compounds (VOCs). Catalyzes an aldol-like condensation reaction between phosphoenolpyruvate (PEP) and D-erythrose 4-phosphate (E4P) to generate 3-deoxy-D-arabino-heptulosonate 7-phosphate (DAH7P) and inorganic phosphate. In Petunia hybrida (Petunia), this protein is Phospho-2-dehydro-3-deoxyheptonate aldolase 2, chloroplastic.